Consider the following 507-residue polypeptide: Prolyl carboxy peptidase like protein 5 (507 aa).

The N-terminal stretch at Met1 to Cys16 is a signal peptide. An N-linked (GlcNAc...) asparagine glycan is attached at Asn125. Ser172 (charge relay system) is an active-site residue. N-linked (GlcNAc...) asparagine glycans are attached at residues Asn332 and Asn407. Catalysis depends on charge relay system residues Asp439 and His466.

Belongs to the peptidase S28 family.

This Caenorhabditis elegans protein is Prolyl carboxy peptidase like protein 5.